Reading from the N-terminus, the 240-residue chain is Expansin-A20 (240 aa).

The N-terminal stretch at 1-21 (MGNILLQLLAVVALCIAPARS) is a signal peptide. Positions 41–145 (GGACGYGNLY…QQVKCWRYGG (105 aa)) constitute an Expansin-like EG45 domain. N107 and N207 each carry an N-linked (GlcNAc...) asparagine glycan. The 80-residue stretch at 155-234 (YFELVLVTNM…GWSFGQTFST (80 aa)) folds into the Expansin-like CBD domain.

It belongs to the expansin family. Expansin A subfamily.

It is found in the secreted. The protein resides in the cell wall. It localises to the membrane. Its function is as follows. May cause loosening and extension of plant cell walls by disrupting non-covalent bonding between cellulose microfibrils and matrix glucans. No enzymatic activity has been found. May be required for rapid internodal elongation in deepwater rice during submergence. The protein is Expansin-A20 (EXPA20) of Oryza sativa subsp. japonica (Rice).